Here is a 110-residue protein sequence, read N- to C-terminus: Insulin (110 aa).

The first 24 residues, 1–24 (MALWMRLLPLLALLALWGPDPAAA), serve as a signal peptide directing secretion. 3 disulfides stabilise this stretch: cysteine 31–cysteine 96, cysteine 43–cysteine 109, and cysteine 95–cysteine 100. A propeptide spans 57–87 (EAEDLQVGQVELGGGPGAGSLQPLALEGSLQ) (c peptide).

This sequence belongs to the insulin family. In terms of assembly, heterodimer of a B chain and an A chain linked by two disulfide bonds.

The protein localises to the secreted. Functionally, insulin decreases blood glucose concentration. It increases cell permeability to monosaccharides, amino acids and fatty acids. It accelerates glycolysis, the pentose phosphate cycle, and glycogen synthesis in liver. The chain is Insulin (INS) from Gorilla gorilla gorilla (Western lowland gorilla).